Reading from the N-terminus, the 47-residue chain is Large ribosomal subunit protein bL34 (47 aa).

Belongs to the bacterial ribosomal protein bL34 family.

This chain is Large ribosomal subunit protein bL34 (rpmH), found in Mycobacterium leprae (strain TN).